Reading from the N-terminus, the 27-residue chain is Cupiennin-4b (27 aa).

A Glutamine amide modification is found at Gln-27.

As to expression, expressed by the venom gland.

It is found in the secreted. The sequence is that of Cupiennin-4b from Cupiennius salei (American wandering spider).